The chain runs to 345 residues: Membrane progestin receptor gamma-A (345 aa).

At 1-52 (MLNLIKLPQVFTINQVPKVFHEDGIISGYRHPCSSAKDCVLSLFQLTNETLN) the chain is on the cytoplasmic side. Residues 53 to 73 (IWTHFLPTWFFLWKLLTVVLV) traverse the membrane as a helical segment. The Extracellular segment spans residues 74–80 (LEDWRDP). The chain crosses the membrane as a helical span at residues 81–101 (FIWPFLVFLLSCCVYPLASSC). Residues 102–114 (AHTFSTMSERARH) lie on the Cytoplasmic side of the membrane. Residues 115–135 (ICFFFDYGALSFYSLGSAIIY) form a helical membrane-spanning segment. The Extracellular portion of the chain corresponds to 136 to 148 (SSYSFPDKWVNGT). A helical transmembrane segment spans residues 149–169 (FHLNYVSIAVVNSIISTALAC). The Cytoplasmic portion of the chain corresponds to 170–201 (YSRLGLPFLEYNCHSIKRPSGKLDQKLCKCLR). Residues 202–222 (IIAFVYPYLFDNIPLFYRIFV) form a helical membrane-spanning segment. The Extracellular segment spans residues 223–272 (CAGEGCTVNEANTVHYQHTSLAFFTGFLFATHLPERLAPGSFDYIGHSHQ). Residues 273–293 (LFHVFAIIGTYFQMTAIELDM) form a helical membrane-spanning segment. Residues 294–314 (AARKQWLHAHLPPVTFLNTVG) are Cytoplasmic-facing. Residues 315–335 (AAFFSVVSGLCIVYVFSLSLF) form a helical membrane-spanning segment. The Extracellular segment spans residues 336–345 (STRGVKNKSF).

Belongs to the ADIPOR family.

The protein localises to the membrane. Its function is as follows. Steroid membrane receptor. Binds progesterone. May be involved in oocyte maturation. The chain is Membrane progestin receptor gamma-A (paqr5a) from Danio rerio (Zebrafish).